The chain runs to 62 residues: Toxin Tst2 (62 aa).

The LCN-type CS-alpha/beta domain maps to 1–62 (KEGYAMDHEG…KVWDYATNKC (62 aa)). 4 disulfides stabilise this stretch: C11–C62, C15–C38, C23–C43, and C27–C45. C62 is subject to Cysteine amide.

Expressed by the venom gland.

It is found in the secreted. Alpha toxins bind voltage-independently at site-3 of sodium channels (Nav) and inhibit the inactivation of the activated channels, thereby blocking neuronal transmission. Is toxic to mice. The protein is Toxin Tst2 of Tityus stigmurus (Brazilian scorpion).